We begin with the raw amino-acid sequence, 155 residues long: 6,7-dimethyl-8-ribityllumazine synthase (155 aa).

Residues F23, 57–59, and 83–85 each bind 5-amino-6-(D-ribitylamino)uracil; these read AFE and AVI. 88 to 89 is a binding site for (2S)-2-hydroxy-3-oxobutyl phosphate; the sequence is AT. The Proton donor role is filled by H91. F114 is a 5-amino-6-(D-ribitylamino)uracil binding site. R128 serves as a coordination point for (2S)-2-hydroxy-3-oxobutyl phosphate.

The protein belongs to the DMRL synthase family.

It carries out the reaction (2S)-2-hydroxy-3-oxobutyl phosphate + 5-amino-6-(D-ribitylamino)uracil = 6,7-dimethyl-8-(1-D-ribityl)lumazine + phosphate + 2 H2O + H(+). The protein operates within cofactor biosynthesis; riboflavin biosynthesis; riboflavin from 2-hydroxy-3-oxobutyl phosphate and 5-amino-6-(D-ribitylamino)uracil: step 1/2. Its function is as follows. Catalyzes the formation of 6,7-dimethyl-8-ribityllumazine by condensation of 5-amino-6-(D-ribitylamino)uracil with 3,4-dihydroxy-2-butanone 4-phosphate. This is the penultimate step in the biosynthesis of riboflavin. The sequence is that of 6,7-dimethyl-8-ribityllumazine synthase from Leptospira biflexa serovar Patoc (strain Patoc 1 / Ames).